Reading from the N-terminus, the 790-residue chain is Cadherin-6 (790 aa).

A signal peptide spans 1–18 (MRTYRYFLLLFWVGQPYP). Residues 19–53 (TFSTPLSKRTSGFPAKKRTLELSGNSKNELSRSKR) constitute a propeptide that is removed on maturation. Cadherin domains follow at residues 54-159 (SWMW…EPIF), 160-268 (TKEV…PPRF), 269-383 (PQST…PPVF), 384-486 (SKLA…DNPP), and 487-608 (EFAE…LVHP). The Extracellular segment spans residues 54–615 (SWMWNQFFLL…VHPTGLSTGA (562 aa)). The N-linked (GlcNAc...) asparagine glycan is linked to asparagine 255. The disordered stretch occupies residues 261–291 (VNDNPPRFPQSTYQFKTPESSPPGTPIGRIK). Over residues 269 to 279 (PQSTYQFKTPE) the composition is skewed to polar residues. N-linked (GlcNAc...) asparagine glycans are attached at residues asparagine 399, asparagine 437, asparagine 455, and asparagine 536. The helical transmembrane segment at 616-636 (LIAILLCIVTLLVTVVLFAAL) threads the bilayer. The Cytoplasmic portion of the chain corresponds to 637-790 (RRQRKKEPLI…YGGVDSDKDS (154 aa)). A phosphoserine mark is found at serine 786 and serine 790.

Its subcellular location is the cell membrane. In terms of biological role, cadherins are calcium-dependent cell adhesion proteins. They preferentially interact with themselves in a homophilic manner in connecting cells; cadherins may thus contribute to the sorting of heterogeneous cell types. The chain is Cadherin-6 (CDH6) from Bos taurus (Bovine).